A 118-amino-acid polypeptide reads, in one-letter code: Cell division protein FtsB (118 aa).

Topologically, residues 1–6 (MRNWRW) are cytoplasmic. A helical membrane pass occupies residues 7–24 (LLLVLAALLAWLQHRFWF). The Periplasmic segment spans residues 25 to 118 (GPGNSGEVRM…DLSQPRREKR (94 aa)). Positions 30–66 (GEVRMLQVQIVQQHQENERLRQRNASLAAEVKNLKDG) form a coiled coil. The tract at residues 98–118 (LPNDTSADHGVDLSQPRREKR) is disordered. A compositionally biased stretch (basic and acidic residues) spans 103–118 (SADHGVDLSQPRREKR).

This sequence belongs to the FtsB family. As to quaternary structure, part of a complex composed of FtsB, FtsL and FtsQ.

It is found in the cell inner membrane. Functionally, essential cell division protein. May link together the upstream cell division proteins, which are predominantly cytoplasmic, with the downstream cell division proteins, which are predominantly periplasmic. The sequence is that of Cell division protein FtsB from Xylella fastidiosa (strain M23).